We begin with the raw amino-acid sequence, 58 residues long: Large ribosomal subunit protein bL32c (58 aa).

Basic residues predominate over residues 1-19 (MAVPKKRKSKMKTRLRKAQ). The interval 1–25 (MAVPKKRKSKMKTRLRKAQWKSEAS) is disordered.

The protein belongs to the bacterial ribosomal protein bL32 family.

The protein resides in the plastid. Its subcellular location is the chloroplast. In Chlorella vulgaris (Green alga), this protein is Large ribosomal subunit protein bL32c (rpl32).